The chain runs to 346 residues: tRNA N6-adenosine threonylcarbamoyltransferase (346 aa).

Fe cation is bound by residues H111 and H115. Residues 134-138 (LVSGG), D167, G180, and N279 each bind substrate. D307 contributes to the Fe cation binding site.

It belongs to the KAE1 / TsaD family. Fe(2+) is required as a cofactor.

It is found in the cytoplasm. The catalysed reaction is L-threonylcarbamoyladenylate + adenosine(37) in tRNA = N(6)-L-threonylcarbamoyladenosine(37) in tRNA + AMP + H(+). In terms of biological role, required for the formation of a threonylcarbamoyl group on adenosine at position 37 (t(6)A37) in tRNAs that read codons beginning with adenine. Is involved in the transfer of the threonylcarbamoyl moiety of threonylcarbamoyl-AMP (TC-AMP) to the N6 group of A37, together with TsaE and TsaB. TsaD likely plays a direct catalytic role in this reaction. In Burkholderia cenocepacia (strain ATCC BAA-245 / DSM 16553 / LMG 16656 / NCTC 13227 / J2315 / CF5610) (Burkholderia cepacia (strain J2315)), this protein is tRNA N6-adenosine threonylcarbamoyltransferase.